The following is a 593-amino-acid chain: Sodium-independent sulfate anion transporter (593 aa).

Over 1–34 (MAPDTCCCSATALRRRLPVLAWVPDYSLQWLRLD) the chain is Extracellular. Residues 35–55 (FIAGLSVGLTVIPQALAYAEV) form a helical membrane-spanning segment. Residue Ala-56 is a topological domain, cytoplasmic. Residues 57–77 (GLPPQYGLYSAFMGCFVYFFL) traverse the membrane as a helical segment. Over 78–82 (GTSRD) the chain is Extracellular. A helical transmembrane segment spans residues 83–100 (VTLGPTAIMSLLVSFYTF). Residues 101–106 (REPAYA) are Cytoplasmic-facing. Residues 107-127 (VLLAFLSGCIQLAMGLLHLGF) form a helical membrane-spanning segment. Topologically, residues 128-176 (LLDFISCPVIKGFTSAASITIGFGQIKNLLGLQKIPRQFFLQVYHTFLH) are extracellular. Residues 177–197 (IGETRVGDAVLGLASMLLLLV) form a helical membrane-spanning segment. The Cytoplasmic segment spans residues 198-233 (LKCMREHMPPPHPEMPLAVKFSRGLVWTVTTARNAL). A helical membrane pass occupies residues 234 to 254 (VVSSAALIAYAFEVTGSHPFV). Topologically, residues 255 to 287 (LTGKIAEGLPPVRIPPFSVTRDNKTISFSEMVQ) are extracellular. The helical transmembrane segment at 288–308 (DMGAGLAVVPLMGLLESIAVA) threads the bilayer. Topologically, residues 309 to 324 (KSFASQNNYRIDANQE) are cytoplasmic. The chain crosses the membrane as a helical span at residues 325–345 (LLAIGLTNVLGSLVSSYPVTG). Residues 346–361 (SFGRTAVNAQTGVCTP) lie on the Extracellular side of the membrane. A helical membrane pass occupies residues 362–382 (AGGLVTGALVLLSLNYLTSLF). Residue Ser-383 is a topological domain, cytoplasmic. The chain crosses the membrane as a helical span at residues 384–404 (YIPKSALAAVIITAVTPLFDV). At 405–417 (KIFRSLWRVQRLD) the chain is on the extracellular side. The helical transmembrane segment at 418–438 (LLPLCVTFLLSFWEIQYGILA) threads the bilayer. Topologically, residues 439-593 (GSLVSLLILL…SSLLKSPSGP (155 aa)) are cytoplasmic. One can recognise an STAS domain in the interval 453-566 (RPKTQVSEGQ…EEAEKFLQQE (114 aa)). Positions 564–593 (QQEPGTEPNSIHEDAVPEQRSSLLKSPSGP) are disordered. The segment covering 582-593 (QRSSLLKSPSGP) has biased composition (polar residues).

This sequence belongs to the SLC26A/SulP transporter (TC 2.A.53) family. As to expression, abundantly expressed in the cerebellum, with a predominant expression in Purkinje cells (at protein level). Predominantly expressed in the kidney and brain. In the kidney localizes in collecting duct intercalated cells (at protein level). In terms of tissue distribution, predominantly expressed in the brain with lower levels in the kidney.

Its subcellular location is the cell membrane. The protein localises to the lysosome membrane. It localises to the apical cell membrane. It is found in the basolateral cell membrane. The enzyme catalyses hydrogencarbonate(in) + chloride(out) = hydrogencarbonate(out) + chloride(in). It catalyses the reaction sulfate(in) + H(+)(in) = sulfate(out) + H(+)(out). The catalysed reaction is oxalate(in) + chloride(out) = oxalate(out) + chloride(in). In terms of biological role, sodium-independent anion exchanger mediating bicarbonate, chloride, sulfate and oxalate transport. Exhibits sodium-independent sulfate anion transporter activity that may cooperate with SLC26A2 to mediate DIDS-sensitive sulfate uptake into high endothelial venules endothelial cells (HEVEC). In the kidney, mediates chloride-bicarbonate exchange, facilitating V-ATPase-mediated acid secretion. May function as a chloride channel, playing an important role in moderating chloride homeostasis and neuronal activity in the cerebellum. This chain is Sodium-independent sulfate anion transporter, found in Mus musculus (Mouse).